We begin with the raw amino-acid sequence, 580 residues long: TRAF-type zinc finger domain-containing protein 1 (580 aa).

N-acetylalanine is present on Ala2. The TRAF-type zinc-finger motif lies at Ile27 to Lys103. Phosphoserine occurs at positions 278, 320, 326, 327, 409, 415, 430, 450, 469, and 532. 3 disordered regions span residues Thr395–Arg453, Pro468–His509, and Phe524–Glu580. Positions Gln407–Glu417 are enriched in polar residues.

As to quaternary structure, interacts with MAVS, TICAM1, TRAF1, TRAF2, TRAF3 and TRAF6. As to expression, expressed in skeletal muscle, brain, liver, kidney, spleen and bone marrow. Expression depends on STAT1.

Negative feedback regulator that controls excessive innate immune responses. Regulates both Toll-like receptor 4 (TLR4) and DDX58/RIG1-like helicases (RLH) pathways. May inhibit the LTR pathway by direct interaction with TRAF6 and attenuation of NF-kappa-B activation. May negatively regulate the RLH pathway downstream from MAVS and upstream of NF-kappa-B and IRF3. The sequence is that of TRAF-type zinc finger domain-containing protein 1 (Trafd1) from Mus musculus (Mouse).